The primary structure comprises 319 residues: tRNA pseudouridine synthase B (319 aa).

Catalysis depends on Asp-47, which acts as the Nucleophile.

It belongs to the pseudouridine synthase TruB family. Type 1 subfamily.

The catalysed reaction is uridine(55) in tRNA = pseudouridine(55) in tRNA. Responsible for synthesis of pseudouridine from uracil-55 in the psi GC loop of transfer RNAs. The sequence is that of tRNA pseudouridine synthase B from Pseudoalteromonas translucida (strain TAC 125).